The following is a 434-amino-acid chain: ATP-dependent protease ATPase subunit HslU (434 aa).

ATP is bound by residues Val-18, 60–65 (GVGKTE), Asp-247, Glu-312, and Arg-384.

The protein belongs to the ClpX chaperone family. HslU subfamily. As to quaternary structure, a double ring-shaped homohexamer of HslV is capped on each side by a ring-shaped HslU homohexamer. The assembly of the HslU/HslV complex is dependent on binding of ATP.

Its subcellular location is the cytoplasm. In terms of biological role, ATPase subunit of a proteasome-like degradation complex; this subunit has chaperone activity. The binding of ATP and its subsequent hydrolysis by HslU are essential for unfolding of protein substrates subsequently hydrolyzed by HslV. HslU recognizes the N-terminal part of its protein substrates and unfolds these before they are guided to HslV for hydrolysis. The sequence is that of ATP-dependent protease ATPase subunit HslU from Hyphomonas neptunium (strain ATCC 15444).